A 113-amino-acid chain; its full sequence is Large ribosomal subunit protein bL17 (113 aa).

This sequence belongs to the bacterial ribosomal protein bL17 family. In terms of assembly, part of the 50S ribosomal subunit. Contacts protein L32.

In Syntrophomonas wolfei subsp. wolfei (strain DSM 2245B / Goettingen), this protein is Large ribosomal subunit protein bL17.